The chain runs to 374 residues: MATEISPTIIPIVMPKWGLSMKEGTVNAWLVDEGTEITVGLPILDVETDKIANAVEAPDAGTLRRKVAQAGDVLPVKALLGVLAPAEVSDAQIDDYVAAYETPADDAGEEDAAAAYQFADVDGIRVRYARKGGGAETVLFIHGFGGDLDNWLFNLDPLADAYTVVALDLPGHGQSSPRLAGTTLAQMAGFVARFMDETGIEAAHVVGHSMGGGVAAQLAVDAPQRVLSVALVSPVGFGDAVNSGYTEGFVSAQSRRELKPVVELLFADAGLVSRQMLDDLLRYKRLDGVTEALTALGQGLFGGGRQSEQPGQRLANSGKRVLVVWGGQDQIIPAAHAEAAPPGATVKVFADAGHMSQMEKANDFNALLKKHLGG.

Positions 9 to 84 constitute a Lipoyl-binding domain; sequence IIPIVMPKWG…PVKALLGVLA (76 aa). K50 is modified (N6-lipoyllysine). In terms of domain architecture, AB hydrolase-1 spans 137–360; sequence TVLFIHGFGG…DAGHMSQMEK (224 aa).

(R)-lipoate serves as cofactor.

It carries out the reaction N(6)-[(R)-dihydrolipoyl]-L-lysyl-[protein] + acetyl-CoA = N(6)-[(R)-S(8)-acetyldihydrolipoyl]-L-lysyl-[protein] + CoA. It participates in ketone degradation; acetoin degradation. In terms of biological role, dihydrolipoamide acetyltransferase involved in acetoin catabolism. In Cupriavidus necator (strain ATCC 17699 / DSM 428 / KCTC 22496 / NCIMB 10442 / H16 / Stanier 337) (Ralstonia eutropha), this protein is Dihydrolipoyllysine-residue acetyltransferase component of acetoin cleaving system (acoC).